Consider the following 407-residue polypeptide: NAD(P)H-quinone oxidoreductase subunit 1 (407 aa).

9 helical membrane passes run 28–48, 96–116, 127–147, 175–195, 203–223, 267–287, 309–329, 347–367, and 374–394; these read WLPL…IAAV, WLFT…YLVI, ITIG…GALM, LALS…VDIV, LFSF…IFLI, LILA…FIVP, ALVG…LAIL, WKFL…LVLL, and TLPL…AMSL.

This sequence belongs to the complex I subunit 1 family. In terms of assembly, NDH-1 is composed of at least 11 different subunits.

The protein resides in the cell inner membrane. It catalyses the reaction a plastoquinone + NADH + (n+1) H(+)(in) = a plastoquinol + NAD(+) + n H(+)(out). It carries out the reaction a plastoquinone + NADPH + (n+1) H(+)(in) = a plastoquinol + NADP(+) + n H(+)(out). Its function is as follows. NDH-1 shuttles electrons from an unknown electron donor, via FMN and iron-sulfur (Fe-S) centers, to quinones in the respiratory and/or the photosynthetic chain. The immediate electron acceptor for the enzyme in this species is believed to be plastoquinone. Couples the redox reaction to proton translocation, and thus conserves the redox energy in a proton gradient. In Gloeobacter violaceus (strain ATCC 29082 / PCC 7421), this protein is NAD(P)H-quinone oxidoreductase subunit 1.